Consider the following 480-residue polypeptide: UDP-glycosyltransferase 71C5 (480 aa).

UDP-alpha-D-glucose is bound by residues S290, A349 to Q351, H366 to E374, and Y388 to Q391.

It belongs to the UDP-glycosyltransferase family.

Possesses low quercetin 3-O-glucosyltransferase activity in vitro. In Arabidopsis thaliana (Mouse-ear cress), this protein is UDP-glycosyltransferase 71C5 (UGT71C5).